Here is an 89-residue protein sequence, read N- to C-terminus: Small ribosomal subunit protein uS14 (89 aa).

This sequence belongs to the universal ribosomal protein uS14 family. In terms of assembly, part of the 30S ribosomal subunit. Contacts proteins S3 and S10.

Binds 16S rRNA, required for the assembly of 30S particles and may also be responsible for determining the conformation of the 16S rRNA at the A site. This is Small ribosomal subunit protein uS14 from Amoebophilus asiaticus (strain 5a2).